The primary structure comprises 359 residues: 3-dehydroquinate synthase (359 aa).

NAD(+) contacts are provided by residues 71–76, 105–109, 129–130, Lys-142, and Lys-151; these read DGEAYK, GVVGD, and TT. Glu-184, His-247, and His-264 together coordinate Zn(2+).

Belongs to the sugar phosphate cyclases superfamily. Dehydroquinate synthase family. Co(2+) is required as a cofactor. The cofactor is Zn(2+). Requires NAD(+) as cofactor.

The protein localises to the cytoplasm. It catalyses the reaction 7-phospho-2-dehydro-3-deoxy-D-arabino-heptonate = 3-dehydroquinate + phosphate. Its pathway is metabolic intermediate biosynthesis; chorismate biosynthesis; chorismate from D-erythrose 4-phosphate and phosphoenolpyruvate: step 2/7. In terms of biological role, catalyzes the conversion of 3-deoxy-D-arabino-heptulosonate 7-phosphate (DAHP) to dehydroquinate (DHQ). This chain is 3-dehydroquinate synthase, found in Burkholderia lata (strain ATCC 17760 / DSM 23089 / LMG 22485 / NCIMB 9086 / R18194 / 383).